A 742-amino-acid polypeptide reads, in one-letter code: Ferric enterobactin receptor PirA (742 aa).

The N-terminal stretch at 1–28 (MYPQFRRGHLAAAVLFASSSLLGGQALA) is a signal peptide. A TBDR plug domain is found at 57 to 184 (QELKQAPGVS…AGGVVNIITK (128 aa)). Disordered regions lie at residues 91–112 (GVNL…IDIR) and 409–435 (SSLK…PKSK). A compositionally biased stretch (polar residues) spans 94–108 (LTGNSSSGQRGNNRQ). Positions 189 to 742 (RLRGSMTVFT…AYYVSMTTSF (554 aa)) constitute a TBDR beta-barrel domain. A disulfide bridge connects residues Cys516 and Cys525. The TonB C-terminal box motif lies at 725–742 (ATYNEPGRAYYVSMTTSF).

It belongs to the TonB-dependent receptor family.

Its subcellular location is the cell outer membrane. Its function is as follows. Specific receptor for the siderophore ferric enterobactin. Probably involved in the transport of siderophores, including host catecholamines such as L-DOPA. The chain is Ferric enterobactin receptor PirA from Pseudomonas aeruginosa (strain ATCC 15692 / DSM 22644 / CIP 104116 / JCM 14847 / LMG 12228 / 1C / PRS 101 / PAO1).